The following is a 1335-amino-acid chain: Protein SPATA31F1 (1335 aa).

A helical membrane pass occupies residues 8–28 (LWEVGYPLYIYGSIFIVIVII). Disordered stretches follow at residues 403-424 (ALKA…SGSD), 480-502 (LPKT…MSPS), 972-1002 (VQQN…SGDM), 1019-1141 (PSLE…LQDS), and 1248-1335 (ENVA…GHPT). The span at 414–424 (SGGQDNDSGSD) shows a compositional bias: polar residues. Over residues 972 to 1000 (VQQNQKQSNSKAVPQGSAHSVSKISQPSG) the composition is skewed to polar residues. 3 stretches are compositionally biased toward basic and acidic residues: residues 1047 to 1064 (NRED…REGD), 1071 to 1083 (STRE…EDQR), and 1129 to 1139 (PGEKESEKDLQ).

It belongs to the SPATA31 family.

It localises to the membrane. This Homo sapiens (Human) protein is Protein SPATA31F1.